Consider the following 284-residue polypeptide: MHELTGKDKLAFNKLQKRLRRQVGNAIVDYGMIRDGDKVMVCLSGGKDSYTMLDILMNLQRNAPVAFELVAVNLDQKQPGFPEHVLPEYLERVGVPYHIVERDTYSVVKEKTPEGKTTCALCSRLRRGTLYGFAEEIGANKVALGHHREDMLETLFLNMFFGGSLKSMPPKLLSDDGKHIVIRPLAYCREADIAEYAEWREFPIIPCNLCGSQPNLQRQVVKEMLTEWEEKHPGRLETMFKAITNVAPSQLADRAMFDFEGLEDKQRDFLARRIETFDVLAREA.

A PP-loop motif motif is present at residues 44-49; it reads SGGKDS. Positions 119, 122, and 210 each coordinate [4Fe-4S] cluster.

The protein belongs to the TtcA family. As to quaternary structure, homodimer. Mg(2+) is required as a cofactor. It depends on [4Fe-4S] cluster as a cofactor.

The protein localises to the cytoplasm. The enzyme catalyses cytidine(32) in tRNA + S-sulfanyl-L-cysteinyl-[cysteine desulfurase] + AH2 + ATP = 2-thiocytidine(32) in tRNA + L-cysteinyl-[cysteine desulfurase] + A + AMP + diphosphate + H(+). The protein operates within tRNA modification. Catalyzes the ATP-dependent 2-thiolation of cytidine in position 32 of tRNA, to form 2-thiocytidine (s(2)C32). The sulfur atoms are provided by the cysteine/cysteine desulfurase (IscS) system. This chain is tRNA-cytidine(32) 2-sulfurtransferase, found in Chromohalobacter salexigens (strain ATCC BAA-138 / DSM 3043 / CIP 106854 / NCIMB 13768 / 1H11).